The chain runs to 346 residues: Large ribosomal subunit protein uL10 (346 aa).

The disordered stretch occupies residues 305 to 346 (EVPAAPAPEAKEEKKEEAEEEEEEKKEVSEEDLSAGLGALFG). Residues 322 to 337 (AEEEEEEKKEVSEEDL) are compositionally biased toward acidic residues.

This sequence belongs to the universal ribosomal protein uL10 family. As to quaternary structure, part of the 50S ribosomal subunit. Forms part of the ribosomal stalk which helps the ribosome interact with GTP-bound translation factors. Forms a heptameric L10(L12)2(L12)2(L12)2 complex, where L10 forms an elongated spine to which the L12 dimers bind in a sequential fashion.

Functionally, forms part of the ribosomal stalk, playing a central role in the interaction of the ribosome with GTP-bound translation factors. The protein is Large ribosomal subunit protein uL10 of Ignicoccus hospitalis (strain KIN4/I / DSM 18386 / JCM 14125).